The sequence spans 199 residues: Pyrrolidone-carboxylate peptidase (199 aa).

Catalysis depends on residues E80, C142, and H166.

Belongs to the peptidase C15 family. In terms of assembly, homotetramer.

It is found in the cytoplasm. The catalysed reaction is Release of an N-terminal pyroglutamyl group from a polypeptide, the second amino acid generally not being Pro.. In terms of biological role, removes 5-oxoproline from various penultimate amino acid residues except L-proline. This chain is Pyrrolidone-carboxylate peptidase, found in Oceanobacillus iheyensis (strain DSM 14371 / CIP 107618 / JCM 11309 / KCTC 3954 / HTE831).